Here is a 453-residue protein sequence, read N- to C-terminus: tRNA modification GTPase MnmE (453 aa).

3 residues coordinate (6S)-5-formyl-5,6,7,8-tetrahydrofolate: Arg22, Glu79, and Lys119. Residues 215–376 (GMKVVIAGRP…LKQHLKSLMG (162 aa)) enclose the TrmE-type G domain. Asn225 is a binding site for K(+). GTP contacts are provided by residues 225-230 (NAGKSS), 244-250 (TEIAGTT), 269-272 (DTAG), and 334-337 (NKAD). Ser229 is a binding site for Mg(2+). The K(+) site is built by Thr244, Ile246, and Thr249. Residue Thr250 coordinates Mg(2+). Lys453 is a (6S)-5-formyl-5,6,7,8-tetrahydrofolate binding site.

The protein belongs to the TRAFAC class TrmE-Era-EngA-EngB-Septin-like GTPase superfamily. TrmE GTPase family. Homodimer. Heterotetramer of two MnmE and two MnmG subunits. The cofactor is K(+).

The protein localises to the cytoplasm. Exhibits a very high intrinsic GTPase hydrolysis rate. Involved in the addition of a carboxymethylaminomethyl (cmnm) group at the wobble position (U34) of certain tRNAs, forming tRNA-cmnm(5)s(2)U34. The protein is tRNA modification GTPase MnmE of Shewanella sp. (strain MR-7).